A 145-amino-acid chain; its full sequence is Group IID secretory phospholipase A2 (145 aa).

Residues 1 to 20 (MELALLCGLVVMAGVIPIQG) form the signal peptide. Intrachain disulfides connect Cys-46–Cys-138, Cys-48–Cys-64, Cys-63–Cys-118, Cys-69–Cys-145, Cys-70–Cys-111, Cys-79–Cys-104, and Cys-97–Cys-109. Residues His-47, Gly-49, and Gly-51 each contribute to the Ca(2+) site. The active site involves His-67. Asp-68 is a Ca(2+) binding site. An N-linked (GlcNAc...) asparagine glycan is attached at Asn-89. Asp-112 is a catalytic residue.

The protein belongs to the phospholipase A2 family. Ca(2+) is required as a cofactor. In terms of tissue distribution, highly expressed in pancreas and spleen and less abundantly in colon, thymus, placenta, small intestine, and prostate.

Its subcellular location is the secreted. It catalyses the reaction a 1,2-diacyl-sn-glycero-3-phosphoethanolamine + H2O = a 1-acyl-sn-glycero-3-phosphoethanolamine + a fatty acid + H(+). It carries out the reaction 1-hexadecanoyl-2-(9Z-octadecenoyl)-sn-glycero-3-phosphoethanolamine + H2O = 1-hexadecanoyl-sn-glycero-3-phosphoethanolamine + (9Z)-octadecenoate + H(+). The enzyme catalyses 1-hexadecanoyl-2-(9Z,12Z-octadecadienoyl)-sn-glycero-3-phosphoethanolamine + H2O = 1-hexadecanoyl-sn-glycero-3-phosphoethanolamine + (9Z,12Z)-octadecadienoate + H(+). The catalysed reaction is 1,2-dihexadecanoyl-sn-glycero-3-phospho-(1'-sn-glycerol) + H2O = 1-hexadecanoyl-sn-glycero-3-phospho-(1'-sn-glycerol) + hexadecanoate + H(+). It catalyses the reaction 1-hexadecanoyl-2-(9Z-octadecenoyl)-sn-glycero-3-phospho-(1'-sn-glycerol) + H2O = 1-hexadecanoyl-sn-glycero-3-phospho-(1'-sn-glycerol) + (9Z)-octadecenoate + H(+). It carries out the reaction a 1,2-diacyl-sn-glycero-3-phosphocholine + H2O = a 1-acyl-sn-glycero-3-phosphocholine + a fatty acid + H(+). The enzyme catalyses 1,2-dihexadecanoyl-sn-glycero-3-phosphocholine + H2O = 1-hexadecanoyl-sn-glycero-3-phosphocholine + hexadecanoate + H(+). The catalysed reaction is 1-hexadecanoyl-2-(9Z-octadecenoyl)-sn-glycero-3-phosphocholine + H2O = 1-hexadecanoyl-sn-glycero-3-phosphocholine + (9Z)-octadecenoate + H(+). It catalyses the reaction 1-hexadecanoyl-2-(9Z,12Z-octadecadienoyl)-sn-glycero-3-phosphocholine + H2O = (9Z,12Z)-octadecadienoate + 1-hexadecanoyl-sn-glycero-3-phosphocholine + H(+). It carries out the reaction 1-hexadecanoyl-2-(4Z,7Z,10Z,13Z,16Z,19Z-docosahexaenoyl)-sn-glycero-3-phosphocholine + H2O = (4Z,7Z,10Z,13Z,16Z,19Z)-docosahexaenoate + 1-hexadecanoyl-sn-glycero-3-phosphocholine + H(+). Its function is as follows. Secretory calcium-dependent phospholipase A2 that primarily targets extracellular lipids, exerting anti-inflammatory and immunosuppressive functions. Hydrolyzes the ester bond of the fatty acyl group attached at sn-2 position of phospholipids (phospholipase A2 activity) with preference for phosphatidylethanolamines and phosphatidylglycerols over phosphatidylcholines. In draining lymph nodes, selectively hydrolyzes diacyl and alkenyl forms of phosphatidylethanolamines, releasing omega-3 polyunsaturated fatty acids (PUFAs) such as eicosapentaenoate and docosahexaenoate that are precursors of the anti-inflammatory lipid mediators, resolvins. During the resolution phase of acute inflammation drives docosahexaenoate-derived resolvin D1 synthesis, which suppresses dendritic cell activation and T-helper 1 immune response. May act in an autocrine and paracrine manner. Via a mechanism independent of its catalytic activity, promotes differentiation of regulatory T cells (Tregs) and participates in the maintenance of immune tolerance. May contribute to lipid remodeling of cellular membranes and generation of lipid mediators involved in pathogen clearance. Displays bactericidal activity against Gram-positive bacteria by directly hydrolyzing phospholipids of the bacterial membrane. This chain is Group IID secretory phospholipase A2 (PLA2G2D), found in Homo sapiens (Human).